Consider the following 670-residue polypeptide: Protein angel homolog 1 (670 aa).

Residues Ser77 and Ser105 each carry the phosphoserine modification.

Belongs to the CCR4/nocturin family.

The polypeptide is Protein angel homolog 1 (ANGEL1) (Homo sapiens (Human)).